Here is a 150-residue protein sequence, read N- to C-terminus: uncharacterized protein (150 aa).

This sequence to A.tumefaciens conjugal transfer protein TraB.

This is an uncharacterized protein from Agrobacterium tumefaciens (strain 15955).